The primary structure comprises 396 residues: Stearoyl-[acyl-carrier-protein] 9-desaturase, chloroplastic (396 aa).

A chloroplast-targeting transit peptide spans 1 to 33 (MALRITPVTLQSERYRSFSFPKKANLRSPKFAM). A Blocked amino end (Ala); partial modification is found at Ala34. Fe cation is bound by residues Glu138, Glu176, His179, Glu229, Glu262, and His265.

This sequence belongs to the fatty acid desaturase type 2 family. Homodimer. Requires Fe(2+) as cofactor. Post-translationally, most of the N-terminus is blocked.

Its subcellular location is the plastid. The protein localises to the chloroplast. The catalysed reaction is octadecanoyl-[ACP] + 2 reduced [2Fe-2S]-[ferredoxin] + O2 + 2 H(+) = (9Z)-octadecenoyl-[ACP] + 2 oxidized [2Fe-2S]-[ferredoxin] + 2 H2O. Its pathway is lipid metabolism; fatty acid metabolism. Converts stearoyl-ACP to oleoyl-ACP by introduction of a cis double bond between carbons 9 and 10 of the acyl chain. The protein is Stearoyl-[acyl-carrier-protein] 9-desaturase, chloroplastic of Carthamus tinctorius (Safflower).